Consider the following 464-residue polypeptide: Glutamate--tRNA ligase (464 aa).

The 'HIGH' region signature appears at P9–G19. A 'KMSKS' region motif is present at residues K242–R246. K245 serves as a coordination point for ATP.

Belongs to the class-I aminoacyl-tRNA synthetase family. Glutamate--tRNA ligase type 1 subfamily. Monomer.

It localises to the cytoplasm. The catalysed reaction is tRNA(Glu) + L-glutamate + ATP = L-glutamyl-tRNA(Glu) + AMP + diphosphate. Its function is as follows. Catalyzes the attachment of glutamate to tRNA(Glu) in a two-step reaction: glutamate is first activated by ATP to form Glu-AMP and then transferred to the acceptor end of tRNA(Glu). The polypeptide is Glutamate--tRNA ligase (Neisseria meningitidis serogroup C (strain 053442)).